The sequence spans 210 residues: Protein-methionine-sulfoxide reductase heme-binding subunit MsrQ (210 aa).

The next 6 helical transmembrane spans lie at 8 to 28, 37 to 57, 75 to 95, 110 to 130, 147 to 167, and 169 to 189; these read LAVFLAACIAPVWWLYQAWIF, VLVENFGVATLVMLLITLSMT, LGLWCFAYALLHLSMYALFIL, PYIIVGALALLGLLALAVTSN, IIYVILGLGLLHMFWIVRADL, and EWALYAGIGAFLLLLRIPVFA.

This sequence belongs to the MsrQ family. As to quaternary structure, heterodimer of a catalytic subunit (MsrP) and a heme-binding subunit (MsrQ). It depends on FMN as a cofactor. Heme b serves as cofactor.

It is found in the cell inner membrane. Part of the MsrPQ system that repairs oxidized periplasmic proteins containing methionine sulfoxide residues (Met-O), using respiratory chain electrons. Thus protects these proteins from oxidative-stress damage caused by reactive species of oxygen and chlorine generated by the host defense mechanisms. MsrPQ is essential for the maintenance of envelope integrity under bleach stress, rescuing a wide series of structurally unrelated periplasmic proteins from methionine oxidation. MsrQ provides electrons for reduction to the reductase catalytic subunit MsrP, using the quinone pool of the respiratory chain. This is Protein-methionine-sulfoxide reductase heme-binding subunit MsrQ from Pseudomonas syringae pv. syringae (strain B728a).